A 188-amino-acid polypeptide reads, in one-letter code: MIKSVIAGAVAMAVVSFGAYAAPTIPQGQGKVTFNGTVVDAPCGIDAQSADQSIDFGQVSKLFLENDGESQPKSFDIKLINCDITNFKKAAGGGGAKTGTVSLTFSGVPSGPQSDMLQTVGATNTAIVVTDPHGKRVKFDGATATGVSYLVDGDNTIHFTAAVRKDGSGNPVTEGAFSAVANFNLTYQ.

The signal sequence occupies residues 1 to 21 (MIKSVIAGAVAMAVVSFGAYA). Residues cysteine 43 and cysteine 82 are joined by a disulfide bond.

This sequence belongs to the fimbrial protein family.

The protein localises to the fimbrium. Functionally, fimbriae (also called pili), polar filaments radiating from the surface of the bacterium to a length of 0.5-1.5 micrometers and numbering 100-300 per cell, enable bacteria to colonize the epithelium of specific host organs. The sequence is that of F7-2 fimbrial protein (F7-2) from Escherichia coli O6:H1 (strain CFT073 / ATCC 700928 / UPEC).